The chain runs to 229 residues: 3-dehydroquinate dehydratase (229 aa).

Residues 29-31 and Arg56 each bind 3-dehydroquinate; that span reads ELR. Catalysis depends on His120, which acts as the Proton donor/acceptor. Lys146 (schiff-base intermediate with substrate) is an active-site residue. Residues Arg187, Thr208, and Gln212 each contribute to the 3-dehydroquinate site.

Belongs to the type-I 3-dehydroquinase family. In terms of assembly, homodimer.

It carries out the reaction 3-dehydroquinate = 3-dehydroshikimate + H2O. It functions in the pathway metabolic intermediate biosynthesis; chorismate biosynthesis; chorismate from D-erythrose 4-phosphate and phosphoenolpyruvate: step 3/7. Functionally, involved in the third step of the chorismate pathway, which leads to the biosynthesis of aromatic amino acids. Catalyzes the cis-dehydration of 3-dehydroquinate (DHQ) and introduces the first double bond of the aromatic ring to yield 3-dehydroshikimate. This chain is 3-dehydroquinate dehydratase, found in Haloarcula marismortui (strain ATCC 43049 / DSM 3752 / JCM 8966 / VKM B-1809) (Halobacterium marismortui).